The chain runs to 236 residues: uncharacterized protein (236 aa).

This sequence to E.coli YfjP and YkfA.

This is an uncharacterized protein from Escherichia coli (strain K12).